A 492-amino-acid chain; its full sequence is G protein-activated inward rectifier potassium channel 1 (492 aa).

Residues 1–72 (MSALRRKLGD…LFTTLVDLKW (72 aa)) are Cytoplasmic-facing. Residues 16-35 (STSASGGGLPPPRAAPRGKR) are disordered. A helical membrane pass occupies residues 73 to 97 (RWNLFIFVLTYTVAWLFMASMWWVI). Residues 98-121 (AYMRGDLNKAHDDSYTPCVANVYN) are Extracellular-facing. The segment at residues 122–133 (FPSAFLFFIETE) is an intramembrane region (helical; Pore-forming). Residues 134–140 (ATIGYGY) constitute an intramembrane region (pore-forming). A Selectivity filter motif is present at residues 135 to 140 (TIGYGY). Residues 141–149 (RYITDKCPE) lie on the Extracellular side of the membrane. A helical membrane pass occupies residues 150–171 (GIILFLFQSILGSIVDAFLIGC). Topologically, residues 172–492 (MFIKMSQPKK…LRKMNSDRFT (321 aa)) are cytoplasmic. The tract at residues 174-201 (IKMSQPKKRAETLMFSEHAAISMRDGKL) is polyphosphoinositide (PIP2)-binding. The disordered stretch occupies residues 452 to 492 (SDPMSQSVADLPPKLQKLSGGGRMEGNLPPKLRKMNSDRFT).

It belongs to the inward rectifier-type potassium channel (TC 1.A.2.1) family. KCNJ3 subfamily. In terms of assembly, associates with KCNJ5/GIRK4 or KCNJ6/GIRK2 or KCNJ9/GIRK3 to form a G-protein activated heteromultimer pore-forming unit. The resulting inward current is much larger.

It localises to the membrane. The catalysed reaction is K(+)(in) = K(+)(out). With respect to regulation, heteromultimer composed of KCNJ3/GIRK1 and KCNJ5/GIRK4 is activated by phosphatidylinositol 4,5 biphosphate (PtdIns(4,5)P2). Inward rectifier potassium channels are characterized by a greater tendency to allow potassium to flow into the cell rather than out of it. Their voltage dependence is regulated by the concentration of extracellular potassium; as external potassium is raised, the voltage range of the channel opening shifts to more positive voltages. The inward rectification is mainly due to the blockage of outward current by internal magnesium. This potassium channel is controlled by G proteins. This receptor plays a crucial role in regulating the heartbeat. The sequence is that of G protein-activated inward rectifier potassium channel 1 (KCNJ3) from Gallus gallus (Chicken).